The primary structure comprises 532 residues: CTP synthase (532 aa).

The segment at 1 to 265 (MKYIVVTGGV…DEYLMRKLNL (265 aa)) is amidoligase domain. Position 12 (Ser12) interacts with CTP. Ser12 serves as a coordination point for UTP. ATP-binding positions include 13–18 (GLGKGI) and Asp70. Asp70 and Glu140 together coordinate Mg(2+). Residues 147–149 (DIE), 186–191 (KTKPTQ), and Lys222 each bind CTP. Residues 186–191 (KTKPTQ) and Lys222 each bind UTP. Residues 289-529 (SIAIVGKYVD…VRAALKYRRE (241 aa)) form the Glutamine amidotransferase type-1 domain. Gly349 serves as a coordination point for L-glutamine. Cys376 functions as the Nucleophile; for glutamine hydrolysis in the catalytic mechanism. L-glutamine is bound by residues 377-380 (FGFQ), Glu400, and Arg457. Residues His502 and Glu504 contribute to the active site.

It belongs to the CTP synthase family. As to quaternary structure, homotetramer.

The enzyme catalyses UTP + L-glutamine + ATP + H2O = CTP + L-glutamate + ADP + phosphate + 2 H(+). It carries out the reaction L-glutamine + H2O = L-glutamate + NH4(+). It catalyses the reaction UTP + NH4(+) + ATP = CTP + ADP + phosphate + 2 H(+). Its pathway is pyrimidine metabolism; CTP biosynthesis via de novo pathway; CTP from UDP: step 2/2. Allosterically activated by GTP, when glutamine is the substrate; GTP has no effect on the reaction when ammonia is the substrate. The allosteric effector GTP functions by stabilizing the protein conformation that binds the tetrahedral intermediate(s) formed during glutamine hydrolysis. Inhibited by the product CTP, via allosteric rather than competitive inhibition. Catalyzes the ATP-dependent amination of UTP to CTP with either L-glutamine or ammonia as the source of nitrogen. Regulates intracellular CTP levels through interactions with the four ribonucleotide triphosphates. This Archaeoglobus fulgidus (strain ATCC 49558 / DSM 4304 / JCM 9628 / NBRC 100126 / VC-16) protein is CTP synthase.